A 623-amino-acid polypeptide reads, in one-letter code: Chaperone protein HtpG (623 aa).

The interval 1–336 is a; substrate-binding; sequence MSMKGQETRG…SNDLPLNVSR (336 aa). The segment at 337–551 is b; sequence EILQDSRVTQ…ADEMSTQMAK (215 aa). The c stretch occupies residues 552–623; the sequence is LFAAAGQEAP…IRRMNKLLSA (72 aa).

The protein belongs to the heat shock protein 90 family. Homodimer.

It is found in the cytoplasm. Its function is as follows. Molecular chaperone. Has ATPase activity. The sequence is that of Chaperone protein HtpG from Serratia proteamaculans (strain 568).